The following is a 179-amino-acid chain: Large ribosomal subunit protein uL5 (179 aa).

This sequence belongs to the universal ribosomal protein uL5 family. As to quaternary structure, part of the 50S ribosomal subunit; part of the 5S rRNA/L5/L18/L25 subcomplex. Contacts the 5S rRNA and the P site tRNA. Forms a bridge to the 30S subunit in the 70S ribosome.

In terms of biological role, this is one of the proteins that bind and probably mediate the attachment of the 5S RNA into the large ribosomal subunit, where it forms part of the central protuberance. In the 70S ribosome it contacts protein S13 of the 30S subunit (bridge B1b), connecting the 2 subunits; this bridge is implicated in subunit movement. Contacts the P site tRNA; the 5S rRNA and some of its associated proteins might help stabilize positioning of ribosome-bound tRNAs. The polypeptide is Large ribosomal subunit protein uL5 (Bacillus pumilus (strain SAFR-032)).